The primary structure comprises 834 residues: Meiotic sister-chromatid recombination protein 3 (834 aa).

Disordered regions lie at residues 75 to 136, 251 to 291, 343 to 378, and 458 to 479; these read PAAA…QPRT, EETE…TGSL, RKLA…KQPL, and VRRS…KKLT. Positions 343-368 are enriched in polar residues; sequence RKLAQPQQGQNQRRTVSFTQGSIDHM.

It is found in the cell membrane. May be involved in the control of meiotic sister-chromatid recombination. The protein is Meiotic sister-chromatid recombination protein 3 (MSC3) of Candida glabrata (strain ATCC 2001 / BCRC 20586 / JCM 3761 / NBRC 0622 / NRRL Y-65 / CBS 138) (Yeast).